Reading from the N-terminus, the 87-residue chain is MKTKLNELLEFPCEFTYKVMGLAQPELVDQVVEVVQRHAPGDYTPQVKPSSKGNYHSVSITINATHIEQVETLYEELGNIEIVRMVL.

This sequence belongs to the UPF0250 family.

The polypeptide is UPF0250 protein NT01EI_2946 (Edwardsiella ictaluri (strain 93-146)).